The following is a 186-amino-acid chain: Ribosome-recycling factor (186 aa).

Belongs to the RRF family.

The protein resides in the cytoplasm. Its function is as follows. Responsible for the release of ribosomes from messenger RNA at the termination of protein biosynthesis. May increase the efficiency of translation by recycling ribosomes from one round of translation to another. The sequence is that of Ribosome-recycling factor from Chlorobium luteolum (strain DSM 273 / BCRC 81028 / 2530) (Pelodictyon luteolum).